Consider the following 539-residue polypeptide: Glycine betaine transporter 2 (539 aa).

12 consecutive transmembrane segments (helical) span residues 44–64 (LTNP…LLAL), 85–105 (FGAY…ALAF), 129–149 (IVLC…EPIA), 175–195 (FMHW…IVLM), 231–251 (CSII…GLQI), 265–285 (FITQ…SALS), 299–319 (IILS…SFII), 348–368 (WWTV…AIFI), 380–400 (LILS…SIVG), 426–446 (VLLA…LFLI), 480–500 (FWGL…SGGI), and 503–523 (LQSF…PSIL).

Belongs to the BCCT transporter (TC 2.A.15) family.

Its subcellular location is the cell inner membrane. Its function is as follows. Involved in the uptake of the osmoprotectant glycine betaine. This is Glycine betaine transporter 2 from Vibrio parahaemolyticus serotype O3:K6 (strain RIMD 2210633).